Reading from the N-terminus, the 296-residue chain is N-acetylmuramic acid 6-phosphate etherase 2 (296 aa).

The region spanning 55-218 is the SIS domain; it reads IVANFKAGGR…STASMVGIGK (164 aa). E83 functions as the Proton donor in the catalytic mechanism. E114 is an active-site residue.

The protein belongs to the GCKR-like family. MurNAc-6-P etherase subfamily. As to quaternary structure, homodimer.

It carries out the reaction N-acetyl-D-muramate 6-phosphate + H2O = N-acetyl-D-glucosamine 6-phosphate + (R)-lactate. It functions in the pathway amino-sugar metabolism; N-acetylmuramate degradation. Specifically catalyzes the cleavage of the D-lactyl ether substituent of MurNAc 6-phosphate, producing GlcNAc 6-phosphate and D-lactate. The chain is N-acetylmuramic acid 6-phosphate etherase 2 from Lactiplantibacillus plantarum (strain ATCC BAA-793 / NCIMB 8826 / WCFS1) (Lactobacillus plantarum).